Reading from the N-terminus, the 99-residue chain is Large ribosomal subunit protein uL23 (99 aa).

It belongs to the universal ribosomal protein uL23 family. As to quaternary structure, part of the 50S ribosomal subunit. Contacts protein L29, and trigger factor when it is bound to the ribosome.

In terms of biological role, one of the early assembly proteins it binds 23S rRNA. One of the proteins that surrounds the polypeptide exit tunnel on the outside of the ribosome. Forms the main docking site for trigger factor binding to the ribosome. The protein is Large ribosomal subunit protein uL23 of Shewanella sediminis (strain HAW-EB3).